We begin with the raw amino-acid sequence, 175 residues long: Bcl-2-related protein A1 (175 aa).

This sequence belongs to the Bcl-2 family. In terms of assembly, interacts directly with BCL2L11/BIM, BAK1, BID, BMF and BBC3. Interacts directly with PMAIP1. Interacts with BOP. Interacts with ING4. Interacts with UBQLN4.

It is found in the cytoplasm. Its function is as follows. Retards apoptosis induced by IL-3 deprivation. May function in the response of hemopoietic cells to external signals and in maintaining endothelial survival during infection. Can inhibit apoptosis induced by serum starvation in the mammary epithelial cell line HC11. This chain is Bcl-2-related protein A1 (BCL2A1), found in Bos taurus (Bovine).